A 138-amino-acid chain; its full sequence is ATP synthase epsilon chain (138 aa).

Belongs to the ATPase epsilon chain family. F-type ATPases have 2 components, CF(1) - the catalytic core - and CF(0) - the membrane proton channel. CF(1) has five subunits: alpha(3), beta(3), gamma(1), delta(1), epsilon(1). CF(0) has three main subunits: a, b and c.

The protein resides in the cell inner membrane. Functionally, produces ATP from ADP in the presence of a proton gradient across the membrane. The protein is ATP synthase epsilon chain of Polaromonas sp. (strain JS666 / ATCC BAA-500).